The chain runs to 121 residues: Small ribosomal subunit protein uS13 (121 aa).

The disordered stretch occupies residues 89-121 (MRHRRGLPVRGQHTKNNARTRKGKKVSIAGRKK).

The protein belongs to the universal ribosomal protein uS13 family. In terms of assembly, part of the 30S ribosomal subunit. Forms a loose heterodimer with protein S19. Forms two bridges to the 50S subunit in the 70S ribosome.

Located at the top of the head of the 30S subunit, it contacts several helices of the 16S rRNA. In the 70S ribosome it contacts the 23S rRNA (bridge B1a) and protein L5 of the 50S subunit (bridge B1b), connecting the 2 subunits; these bridges are implicated in subunit movement. Contacts the tRNAs in the A and P-sites. This Pediococcus pentosaceus (strain ATCC 25745 / CCUG 21536 / LMG 10740 / 183-1w) protein is Small ribosomal subunit protein uS13.